A 149-amino-acid chain; its full sequence is MKIITQNKKAHFEYFIEQKFVAGIKLQGSEVKSIRAGKCSINEAYITFRNGEVFILNMHIAKFDASSIFNHEETRTRKLLLNRSEIDKLMGAQTRDGMTIIPLTVELHEGLIKVVIALAKGKKLFDKRETIKERDIKREQQQSLKGKMR.

Belongs to the SmpB family.

It is found in the cytoplasm. Required for rescue of stalled ribosomes mediated by trans-translation. Binds to transfer-messenger RNA (tmRNA), required for stable association of tmRNA with ribosomes. tmRNA and SmpB together mimic tRNA shape, replacing the anticodon stem-loop with SmpB. tmRNA is encoded by the ssrA gene; the 2 termini fold to resemble tRNA(Ala) and it encodes a 'tag peptide', a short internal open reading frame. During trans-translation Ala-aminoacylated tmRNA acts like a tRNA, entering the A-site of stalled ribosomes, displacing the stalled mRNA. The ribosome then switches to translate the ORF on the tmRNA; the nascent peptide is terminated with the 'tag peptide' encoded by the tmRNA and targeted for degradation. The ribosome is freed to recommence translation, which seems to be the essential function of trans-translation. The polypeptide is SsrA-binding protein (Acholeplasma laidlawii (strain PG-8A)).